We begin with the raw amino-acid sequence, 371 residues long: Protein disulfide isomerase-like 2-2 (371 aa).

Residues 1–27 (MAIPRISPRKTLPLFAALALALAWAFA) form the signal peptide. Thioredoxin domains are found at residues 28-143 (APAF…TEGG) and 147-262 (KLAT…EKCG). Catalysis depends on nucleophile residues cysteine 64, cysteine 67, cysteine 183, and cysteine 186. Intrachain disulfides connect cysteine 64–cysteine 67 and cysteine 183–cysteine 186.

Belongs to the protein disulfide isomerase family.

It localises to the secreted. It carries out the reaction Catalyzes the rearrangement of -S-S- bonds in proteins.. In terms of biological role, acts as a protein-folding catalyst that interacts with nascent polypeptides to catalyze the formation, isomerization, and reduction or oxidation of disulfide bonds. May play a role in storage protein biogenesis. In Oryza sativa subsp. japonica (Rice), this protein is Protein disulfide isomerase-like 2-2 (PDIL2-2).